We begin with the raw amino-acid sequence, 244 residues long: Probable Ni/Fe-hydrogenase B-type cytochrome subunit (244 aa).

A run of 4 helical transmembrane segments spans residues L39–G59, F73–M93, F150–Y171, and L204–I221.

The protein belongs to the HupC/HyaC/HydC family.

The protein resides in the cell membrane. In terms of biological role, probable b-type cytochrome. This Cupriavidus necator (strain ATCC 17699 / DSM 428 / KCTC 22496 / NCIMB 10442 / H16 / Stanier 337) (Ralstonia eutropha) protein is Probable Ni/Fe-hydrogenase B-type cytochrome subunit (hoxZ).